A 393-amino-acid polypeptide reads, in one-letter code: Phosphoglycerate kinase (393 aa).

Substrate contacts are provided by residues 21–23 (DFN), Arg-37, 60–63 (HLGR), Arg-119, and Arg-152. ATP-binding positions include Lys-202, Glu-323, and 349 to 352 (GGDT).

It belongs to the phosphoglycerate kinase family. Monomer.

It is found in the cytoplasm. It catalyses the reaction (2R)-3-phosphoglycerate + ATP = (2R)-3-phospho-glyceroyl phosphate + ADP. The protein operates within carbohydrate degradation; glycolysis; pyruvate from D-glyceraldehyde 3-phosphate: step 2/5. This chain is Phosphoglycerate kinase, found in Desulforudis audaxviator (strain MP104C).